A 215-amino-acid chain; its full sequence is Floral homeotic protein GLOBOSA (215 aa).

The MADS-box domain maps to 3 to 57 (RGKIEIKRIENSSNRQVTYSKRRNGIMKKAKEISVLCDAHVSVIIFASSGKMHEF). The K-box domain occupies 84–170 (HEHLDNEINR…QFKLRQMHLD (87 aa)).

It localises to the nucleus. Its function is as follows. Transcription factor involved in the genetic control of flower development. Acts in conjunction with DEFICIENS (defA). The sequence is that of Floral homeotic protein GLOBOSA (GLO) from Antirrhinum majus (Garden snapdragon).